Reading from the N-terminus, the 685-residue chain is DEAD-box ATP-dependent RNA helicase 7 (685 aa).

The disordered stretch occupies residues 1–89; the sequence is MPSISMMSDA…SELVQADDLK (89 aa). Composition is skewed to basic and acidic residues over residues 22–42 and 66–78; these read MKSETLDSDDTVVKKEKSSSK and AVDLDDSSDKSDN. The Q motif motif lies at 107 to 135; it reads NSLSNFRISKPLKDVLISKGIKALFPIQA. The region spanning 138 to 320 is the Helicase ATP-binding domain; that stretch reads FDNVIDGCDL…TRFLKSAKKT (183 aa). Residue 151–158 coordinates ATP; the sequence is ARTGQGKT. Residues 266 to 269 carry the DEAD box motif; sequence DEAD. Residues 349–491 form the Helicase C-terminal domain; it reads DLIPDIIRCY…LSAPQPVDVA (143 aa).

Belongs to the DEAD box helicase family. DDX21/DDX50 subfamily.

Its subcellular location is the nucleus. The catalysed reaction is ATP + H2O = ADP + phosphate + H(+). The protein is DEAD-box ATP-dependent RNA helicase 7 (RH7) of Spinacia oleracea (Spinach).